We begin with the raw amino-acid sequence, 192 residues long: Fumarylpyruvate hydrolase (192 aa).

A divalent metal cation contacts are provided by E41, E43, and D72.

The protein belongs to the FAH family. Mg(2+) is required as a cofactor. It depends on Mn(2+) as a cofactor.

It catalyses the reaction 3-fumarylpyruvate + H2O = fumarate + pyruvate + H(+). The protein operates within aromatic compound metabolism; naphthalene degradation. Its function is as follows. Involved in the catabolism of gentisate (2,5-dihydroxybenzoate) a key intermediates in the aerobic pathways for the metabolism of a large number of aromatic compoun such as naphthalene. Catalyzes the hydrolytic cleavage of fumarylpyruvate to form fumarate and pyruvate. In Ralstonia sp, this protein is Fumarylpyruvate hydrolase.